The sequence spans 290 residues: F-box protein PP2-A13 (290 aa).

Residues 21–67 (RKLRLVDLPENCVALIMTRLDPPEICRLARLNRMFRRASSADFIWES) enclose the F-box domain.

Part of a SCF (ASK-cullin-F-box) protein ligase complex. Interacts with SKP1A/ASK1, SKP1B/ASK2, ASK5, ASK11 and ASK13.

It localises to the nucleus. It participates in protein modification; protein ubiquitination. Its function is as follows. Component of SCF(ASK-cullin-F-box) E3 ubiquitin ligase complexes, which may mediate the ubiquitination and subsequent proteasomal degradation of target proteins. The polypeptide is F-box protein PP2-A13 (PP2A13) (Arabidopsis thaliana (Mouse-ear cress)).